Here is a 232-residue protein sequence, read N- to C-terminus: Small ribosomal subunit protein uS3 (232 aa).

One can recognise a KH type-2 domain in the interval 39–107; the sequence is VRQFLIKELA…PAQINIAEVR (69 aa).

The protein belongs to the universal ribosomal protein uS3 family. In terms of assembly, part of the 30S ribosomal subunit. Forms a tight complex with proteins S10 and S14.

Binds the lower part of the 30S subunit head. Binds mRNA in the 70S ribosome, positioning it for translation. The chain is Small ribosomal subunit protein uS3 from Serratia proteamaculans (strain 568).